The following is a 350-amino-acid chain: Biotin synthase (350 aa).

The 225-residue stretch at Arg38–Ser262 folds into the Radical SAM core domain. Cys53, Cys57, and Cys60 together coordinate [4Fe-4S] cluster. [2Fe-2S] cluster contacts are provided by Cys97, Cys128, Cys188, and Arg260.

This sequence belongs to the radical SAM superfamily. Biotin synthase family. Homodimer. It depends on [4Fe-4S] cluster as a cofactor. Requires [2Fe-2S] cluster as cofactor.

It catalyses the reaction (4R,5S)-dethiobiotin + (sulfur carrier)-SH + 2 reduced [2Fe-2S]-[ferredoxin] + 2 S-adenosyl-L-methionine = (sulfur carrier)-H + biotin + 2 5'-deoxyadenosine + 2 L-methionine + 2 oxidized [2Fe-2S]-[ferredoxin]. Its pathway is cofactor biosynthesis; biotin biosynthesis; biotin from 7,8-diaminononanoate: step 2/2. Catalyzes the conversion of dethiobiotin (DTB) to biotin by the insertion of a sulfur atom into dethiobiotin via a radical-based mechanism. This chain is Biotin synthase, found in Yersinia enterocolitica serotype O:8 / biotype 1B (strain NCTC 13174 / 8081).